The sequence spans 315 residues: Ornithine carbamoyltransferase (315 aa).

Carbamoyl phosphate-binding positions include 57 to 60 (STRT), Gln84, Arg108, and 135 to 138 (HPCQ). Residues Asn166, Asp230, and 234-235 (SM) each bind L-ornithine. Carbamoyl phosphate is bound by residues 270-271 (CL) and Arg298.

It belongs to the aspartate/ornithine carbamoyltransferase superfamily. OTCase family.

It localises to the cytoplasm. The enzyme catalyses carbamoyl phosphate + L-ornithine = L-citrulline + phosphate + H(+). Its pathway is amino-acid biosynthesis; L-arginine biosynthesis; L-arginine from L-ornithine and carbamoyl phosphate: step 1/3. Its function is as follows. Reversibly catalyzes the transfer of the carbamoyl group from carbamoyl phosphate (CP) to the N(epsilon) atom of ornithine (ORN) to produce L-citrulline. This Thermococcus kodakarensis (strain ATCC BAA-918 / JCM 12380 / KOD1) (Pyrococcus kodakaraensis (strain KOD1)) protein is Ornithine carbamoyltransferase.